A 534-amino-acid polypeptide reads, in one-letter code: Protein tweety homolog 2 (534 aa).

Over 1 to 44 (MAAARVEYIAPWWVYWLHNFPHVDLSLRQKSPDFNPKDPGYQQT) the chain is Extracellular. The chain crosses the membrane as a helical span at residues 45–65 (LLFVALIVALCAAVNLLFVSV). The Cytoplasmic segment spans residues 66 to 87 (YLICLCCCKKEDETETKKTSSC). Residues 88–108 (CVTWTAAVSGLLCCAAVGIGF) form a helical membrane-spanning segment. At 109–213 (YGNSETNDGV…QTSTIEYYRW (105 aa)) the chain is on the extracellular side. Positions 113 and 116 each coordinate Ca(2+). A glycan (N-linked (GlcNAc...) asparagine) is linked at Asn129. An RGD motif is present at residues 164–166 (RGD). A glycan (N-linked (GlcNAc...) asparagine) is linked at Asn197. Residues 214–234 (LSYLLLFISYVVICLVTCVGL) form a helical membrane-spanning segment. Residues 235–240 (AKKSKC) are Cytoplasmic-facing. The chain crosses the membrane as a helical span at residues 241-261 (LLLIMLCFGLIALMLSWTSLA). Over 262 to 388 (LETSSAMGTS…IGICYDGVEG (127 aa)) the chain is Extracellular. Intrachain disulfides connect Cys274–Cys382 and Cys300–Cys367. N-linked (GlcNAc...) asparagine glycosylation is found at Asn283 and Asn352. Residues 389–409 (MLYLGLFSLLAALAFTAMVCA) traverse the membrane as a helical segment. The Cytoplasmic portion of the chain corresponds to 410 to 534 (MPQAWKHLEA…SSIYSNVFPA (125 aa)).

It belongs to the tweety family. As to quaternary structure, forms cis-homodimers in the presence of Ca(+2) and forms monomers and trans-dimers in the absence of Ca(2+).

The protein resides in the cell membrane. The enzyme catalyses chloride(in) = chloride(out). It catalyses the reaction L-glutamate(out) = L-glutamate(in). May act as a calcium-independent, swelling-dependent volume-regulated anion channel (VRAC-swell) which plays a pivotal role in the process of regulatory volume decrease (RVD) in the brain through the efflux of anions like chloride and organic osmolytes like glutamate. Probable large-conductance Ca(2+)-activated chloride channel. This is Protein tweety homolog 2 (ttyh2) from Xenopus tropicalis (Western clawed frog).